A 261-amino-acid polypeptide reads, in one-letter code: Na(+)-translocating NADH-quinone reductase subunit C (261 aa).

A helical transmembrane segment spans residues 12–32 (LGVVVGLSLVCSIIVSTAAVG). The residue at position 229 (threonine 229) is an FMN phosphoryl threonine.

Composed of six subunits; NqrA, NqrB, NqrC, NqrD, NqrE and NqrF. The cofactor is FMN.

The protein resides in the cell inner membrane. It catalyses the reaction a ubiquinone + n Na(+)(in) + NADH + H(+) = a ubiquinol + n Na(+)(out) + NAD(+). Functionally, NQR complex catalyzes the reduction of ubiquinone-1 to ubiquinol by two successive reactions, coupled with the transport of Na(+) ions from the cytoplasm to the periplasm. NqrA to NqrE are probably involved in the second step, the conversion of ubisemiquinone to ubiquinol. This chain is Na(+)-translocating NADH-quinone reductase subunit C, found in Vibrio campbellii (strain ATCC BAA-1116).